The following is a 204-amino-acid chain: Urease accessory protein UreG (204 aa).

11–18 (GPVGAGKT) is a GTP binding site.

The protein belongs to the SIMIBI class G3E GTPase family. UreG subfamily. In terms of assembly, homodimer. UreD, UreF and UreG form a complex that acts as a GTP-hydrolysis-dependent molecular chaperone, activating the urease apoprotein by helping to assemble the nickel containing metallocenter of UreC. The UreE protein probably delivers the nickel.

It is found in the cytoplasm. Its function is as follows. Facilitates the functional incorporation of the urease nickel metallocenter. This process requires GTP hydrolysis, probably effectuated by UreG. The polypeptide is Urease accessory protein UreG (Staphylococcus epidermidis (strain ATCC 12228 / FDA PCI 1200)).